The following is a 1168-amino-acid chain: MLEGRILAVSSQTKAVSGIPGAPKRVSFAKIREPLEVPGLLDVQTDSFEWLIGAQSWRERAAARGDSAISGGLEDILAELSPIEDFSGSMSLSFSDPRFDEVKASTDECKDKDMTYAAPLFVTAEFINNNTGEIKSQTVFMGDFPMMTDKGTFIINGTERVVVSQLVRSPGVYFDHSVDKGTEKDLHSVKVIPGRGAWLEFDVDKRDTVGVRIDRKRRQPVTVLLKALGWTTEQITERFGFSEILMATLEKDNTAGTDEALLDIYRKLRPGEPPTKESAQTLLENLFFKDKRYDLARVGRYKINKKLGLNLGQPIVASTLTEEDIVATIEYLVRLHAGDTEMTAPGGSAVPVEVDDIDHFGNRRLRTVGELIQNQIRVGLSRMERVVRERMTTQDVEAITPQTLINIRPVVAAIKEFFGTSQLSQFMDQNNPLSGLTHKRRLSALGPGGLSRERAGLEVRDVHPSHYGRMCPIETPEGPNIGLIGSLSVYARVNPFGFIETPYRKVENGQVTDQVDYLTADEEDRHVVAQANSALDANGHFTDDRILVRRKGGEVEFVSSAEIDYMDVSPRQMVSVATAMIPFLEHDDANRALMGANMQRQAVPLVRSEAPLVGTGMELRAAVDAGDVIVTEKTGVVEEVSADYVTVMADDGSRKTYRMRKFARSNQGTCANQRPIVDEGQRVEFGQVLADGPCTENGEMALGKNLLVAIMPWEGHNYEDAIILSQRLVEEDVLTSIHIEEHEIDARDTKLGAEEITRDIPNVSDEVLADLDERGIIRIGAEVRDGDVLVGKVTPKGETELTPEERLLRAIFGEKAREVRDTSLKVPHGETGKVIGIRVFSRDDDDDLPPGVNELVRVYVAQKRKIQDGDKLAGRHGNKGVIGKILPQEDMPFLPDGTPVDIILNTHGVPRRMNIGQILETHLGWIGKTGWNVQIAGDGSRPDWAEQLPEEMLSAPADSNIATPVFDGAKEDELTGLLGSTLPNRDGEVMVASDGKATLFDGRSGEPFPYPVSVGYMYIIKLHHLVDDKIHARSTGPYSMITQQPLGGKAQFGGQRFGEMECWAMQAYGAAYTLQELLTIKSDDVVGRVKVYEAIVKGENIPEPGIPESFKVLLKELQSLCLNVEVLSSDGAAIAMADGDDEDLERAAANLGINLSRNEAATVDDLAN.

This sequence belongs to the RNA polymerase beta chain family. The RNAP catalytic core consists of 2 alpha, 1 beta, 1 beta' and 1 omega subunit. When a sigma factor is associated with the core the holoenzyme is formed, which can initiate transcription.

The enzyme catalyses RNA(n) + a ribonucleoside 5'-triphosphate = RNA(n+1) + diphosphate. DNA-dependent RNA polymerase catalyzes the transcription of DNA into RNA using the four ribonucleoside triphosphates as substrates. In Rhodococcus jostii (strain RHA1), this protein is DNA-directed RNA polymerase subunit beta.